Consider the following 105-residue polypeptide: Large ribosomal subunit protein bL21 (105 aa).

The protein belongs to the bacterial ribosomal protein bL21 family. Part of the 50S ribosomal subunit. Contacts protein L20.

In terms of biological role, this protein binds to 23S rRNA in the presence of protein L20. In Blochmanniella pennsylvanica (strain BPEN), this protein is Large ribosomal subunit protein bL21.